The primary structure comprises 116 residues: Large ribosomal subunit protein bL17 (116 aa).

Belongs to the bacterial ribosomal protein bL17 family. In terms of assembly, part of the 50S ribosomal subunit. Contacts protein L32.

The sequence is that of Large ribosomal subunit protein bL17 from Trichormus variabilis (strain ATCC 29413 / PCC 7937) (Anabaena variabilis).